The following is a 171-amino-acid chain: 3-hydroxydecanoyl-[acyl-carrier-protein] dehydratase (171 aa).

The active site involves histidine 70.

The protein belongs to the thioester dehydratase family. FabA subfamily. In terms of assembly, homodimer.

It is found in the cytoplasm. The catalysed reaction is a (3R)-hydroxyacyl-[ACP] = a (2E)-enoyl-[ACP] + H2O. The enzyme catalyses (3R)-hydroxydecanoyl-[ACP] = (2E)-decenoyl-[ACP] + H2O. It catalyses the reaction (2E)-decenoyl-[ACP] = (3Z)-decenoyl-[ACP]. It participates in lipid metabolism; fatty acid biosynthesis. Necessary for the introduction of cis unsaturation into fatty acids. Catalyzes the dehydration of (3R)-3-hydroxydecanoyl-ACP to E-(2)-decenoyl-ACP and then its isomerization to Z-(3)-decenoyl-ACP. Can catalyze the dehydratase reaction for beta-hydroxyacyl-ACPs with saturated chain lengths up to 16:0, being most active on intermediate chain length. This chain is 3-hydroxydecanoyl-[acyl-carrier-protein] dehydratase, found in Pseudomonas fluorescens (strain Pf0-1).